Reading from the N-terminus, the 123-residue chain is Ribonuclease P protein component (123 aa).

This sequence belongs to the RnpA family. Consists of a catalytic RNA component (M1 or rnpB) and a protein subunit.

The enzyme catalyses Endonucleolytic cleavage of RNA, removing 5'-extranucleotides from tRNA precursor.. RNaseP catalyzes the removal of the 5'-leader sequence from pre-tRNA to produce the mature 5'-terminus. It can also cleave other RNA substrates such as 4.5S RNA. The protein component plays an auxiliary but essential role in vivo by binding to the 5'-leader sequence and broadening the substrate specificity of the ribozyme. This Streptomyces bikiniensis protein is Ribonuclease P protein component.